The following is a 445-amino-acid chain: Probable glycine dehydrogenase (decarboxylating) subunit 1 (445 aa).

The protein belongs to the GcvP family. N-terminal subunit subfamily. In terms of assembly, the glycine cleavage system is composed of four proteins: P, T, L and H. In this organism, the P 'protein' is a heterodimer of two subunits.

It catalyses the reaction N(6)-[(R)-lipoyl]-L-lysyl-[glycine-cleavage complex H protein] + glycine + H(+) = N(6)-[(R)-S(8)-aminomethyldihydrolipoyl]-L-lysyl-[glycine-cleavage complex H protein] + CO2. In terms of biological role, the glycine cleavage system catalyzes the degradation of glycine. The P protein binds the alpha-amino group of glycine through its pyridoxal phosphate cofactor; CO(2) is released and the remaining methylamine moiety is then transferred to the lipoamide cofactor of the H protein. The sequence is that of Probable glycine dehydrogenase (decarboxylating) subunit 1 from Chlorobium chlorochromatii (strain CaD3).